Consider the following 344-residue polypeptide: Protein-glutamate methylesterase/protein-glutamine glutaminase (344 aa).

Residues 7 to 124 (RVLVVDDSAF…SLTFRQVAPE (118 aa)) form the Response regulatory domain. D58 is subject to 4-aspartylphosphate. Residues 154–344 (PAVSGKIVVI…KIPEKLIELV (191 aa)) enclose the CheB-type methylesterase domain. Active-site residues include S166, H193, and D289.

Belongs to the CheB family. Post-translationally, phosphorylated by CheA. Phosphorylation of the N-terminal regulatory domain activates the methylesterase activity.

The protein resides in the cytoplasm. It carries out the reaction [protein]-L-glutamate 5-O-methyl ester + H2O = L-glutamyl-[protein] + methanol + H(+). The catalysed reaction is L-glutaminyl-[protein] + H2O = L-glutamyl-[protein] + NH4(+). Involved in chemotaxis. Part of a chemotaxis signal transduction system that modulates chemotaxis in response to various stimuli. Catalyzes the demethylation of specific methylglutamate residues introduced into the chemoreceptors (methyl-accepting chemotaxis proteins or MCP) by CheR. Also mediates the irreversible deamidation of specific glutamine residues to glutamic acid. The protein is Protein-glutamate methylesterase/protein-glutamine glutaminase of Thermotoga maritima (strain ATCC 43589 / DSM 3109 / JCM 10099 / NBRC 100826 / MSB8).